Reading from the N-terminus, the 452-residue chain is Glycine receptor subunit alpha-2 (452 aa).

The signal sequence occupies residues 1–27; that stretch reads MNRQLVNILTALFAFFLGTNHFREAFC. Residues 28-256 lie on the Extracellular side of the membrane; that stretch reads KDHDSRSGKH…KFHLERQMGY (229 aa). N-linked (GlcNAc...) asparagine glycosylation occurs at asparagine 72. Arginine 99 is a binding site for glycine. Residue arginine 99 participates in strychnine binding. The N-linked (GlcNAc...) asparagine glycan is linked to asparagine 103. Serine 163 contributes to the glycine binding site. Cysteine 172 and cysteine 186 are joined by a disulfide. 2 residues coordinate Zn(2+): glutamate 226 and glutamate 228. The cysteines at positions 232 and 243 are disulfide-linked. Threonine 238 contributes to the glycine binding site. Position 249 (histidine 249) interacts with Zn(2+). The helical transmembrane segment at 257–278 threads the bilayer; sequence YLIQMYIPSLLIVILSWVSFWI. Residues 279–283 lie on the Cytoplasmic side of the membrane; that stretch reads NMDAA. A helical transmembrane segment spans residues 284-304; the sequence is PARVALGITTVLTMTTQSSGS. Residues 305 to 315 are Extracellular-facing; the sequence is RASLPKVSYVK. The helical transmembrane segment at 316-336 threads the bilayer; that stretch reads AIDIWMAVCLLFVFAALLEYA. The Cytoplasmic segment spans residues 337 to 420; the sequence is AVNFVSRQHK…FVDRAKRIDT (84 aa). Residues 421–441 form a helical membrane-spanning segment; it reads ISRAAFPLAFLIFNIFYWITY. The Extracellular portion of the chain corresponds to 442–452; the sequence is KIIRHEDVHKK.

It belongs to the ligand-gated ion channel (TC 1.A.9) family. Glycine receptor (TC 1.A.9.3) subfamily. GLRA2 sub-subfamily. Interacts with GLRB. Heteropentamer composed of GLRA2 and GLRB; functional GLRB-GLRA2 heteropentamers contain four GLRA2 subunits and one GLRB subunit, although alternative subunit composition cannot be excluded. Homopentamer (in vitro). Both homopentamers and heteropentamers form functional ion channels, but their characteristics are subtly different.

The protein resides in the postsynaptic cell membrane. Its subcellular location is the synapse. It localises to the cell membrane. It is found in the cell projection. The enzyme catalyses chloride(in) = chloride(out). Its activity is regulated as follows. Channel opening is triggered by extracellular glycine. Channel opening is also triggered by taurine and beta-alanine. Inhibited by strychnine. Inhibited by picrotoxin. Its function is as follows. Subunit of heteromeric glycine-gated chloride channels. Plays a role in synaptic plasticity. Contributes to the generation of inhibitory postsynaptic currents, and is involved in the down-regulation of neuronal excitability. Plays a role in cellular responses to ethanol. The protein is Glycine receptor subunit alpha-2 of Rattus norvegicus (Rat).